A 589-amino-acid chain; its full sequence is Early growth response protein 4 (589 aa).

3 disordered regions span residues 29–101 (GSAL…HSRR), 383–411 (AEGL…ASTQ), and 436–466 (PGSS…GRRG). Positions 76-86 (PLPPASPPPAR) are enriched in pro residues. Over residues 92 to 101 (ARPRAPHSRR) the composition is skewed to basic residues. Gly residues predominate over residues 395-404 (GEGGSSGDGG). Over residues 444–454 (PPVPPPPPTPF) the composition is skewed to pro residues. 3 C2H2-type zinc fingers span residues 483–507 (FACP…LRIH), 513–535 (FQCR…VRTH), and 541–563 (FACD…SKVH).

The protein belongs to the EGR C2H2-type zinc-finger protein family.

It is found in the nucleus. Transcriptional regulator. Recognizes and binds to the DNA sequence 5'-GCGGGGGCG-3' (GSG). Activates the transcription of target genes whose products are required for mitogenesis and differentiation. This is Early growth response protein 4 (EGR4) from Homo sapiens (Human).